The chain runs to 367 residues: MTVPEHPFGLMAKVYRDIFPLVHQELDIWKQKSESIHNSELKAQATASIRDKTFHCEGGGILALLSGSQKQKCVEFIIAYQTISDYLDNLCDRSTSLDPQDFRMLHASMQDALTVGAELQNYYQFREEQDDSGYLHELVKTCQRVLGSIEHYDMIKPYLLELCGYYCDLQVHKHVIEHERVPRLEKWFTQYESELPEMEWYEFSACAGSTLGIFCLVAYSFQPDFTESTAKKIRDSYFPYIQGLHILLDYLIDQEEDLLEGDLNFCSYYQSHEEMMDRLEHFIHKADEHLQGIPHENFHRLINRGLLGVYLSDDKVAGQKEMGRLAKKLIKASGKTSLFFYINGRAYRKFQKMSWMKNSKKKAQIIC.

Belongs to the large terpene synthase family.

It carries out the reaction all-trans-heptaprenyl diphosphate = (R)-tetraprenyl-beta-curcumene + diphosphate. Its function is as follows. Catalyzes the transformation of a linear C35 prenyl diphosphate chain to form tetraprenyl-beta-curcumene. The sequence is that of Tetraprenyl-beta-curcumene synthase (ytpB) from Bacillus subtilis (strain 168).